The chain runs to 271 residues: Calretinin (271 aa).

6 EF-hand domains span residues 16–51, 63–98, 107–142, 151–186, 195–230, and 235–270; these read LTAS…LEKA, NFGE…EENF, GSSA…LLKK, KLQE…QENF, LTSE…LYEK, and MNIQ…SEPP. Ca(2+)-binding residues include D29, D31, N33, Y35, E40, D76, N78, D80, K82, E87, D120, D122, S124, Y126, E131, D164, N166, D168, K170, E175, D208, D210, S212, Y214, and E219. Position 214 is a phosphotyrosine (Y214).

Belongs to the calbindin family. In terms of tissue distribution, widely expressed in central nervous system. Expressed in type I unipolar brush cells of the cerebellum (at protein level).

The protein resides in the synapse. Its subcellular location is the cell projection. The protein localises to the dendrite. Its function is as follows. Calcium-binding protein involved in calcium homeostasis and signal transduction. It plays a critical role in buffering intracellular calcium levels and modulating calcium-dependent signaling pathways. Predominantly expressed in specific neuronal populations, influences synaptic plasticity and neuronal excitability, contributing to learning and memory. During embryonic development, it facilitates neuronal differentiation and maturation. This is Calretinin (Calb2) from Mus musculus (Mouse).